The primary structure comprises 84 residues: CDC42 small effector protein 2 (84 aa).

Residues Cys-10 and Cys-11 are each lipidated (S-palmitoyl cysteine). A CRIB domain is found at 29 to 42; sequence IGEPTNFAHTAHVG. A phosphoserine mark is found at Ser-43 and Ser-52.

The protein belongs to the CDC42SE/SPEC family. Interacts with CDC42 (in GTP-bound form). Interacts weakly with RAC1 and not at all with RHOA.

The protein resides in the cytoplasm. It is found in the cytoskeleton. Its subcellular location is the cell membrane. It localises to the cell projection. The protein localises to the phagocytic cup. Probably involved in the organization of the actin cytoskeleton by acting downstream of CDC42, inducing actin filament assembly. Alters CDC42-induced cell shape changes. In activated T-cells, may play a role in CDC42-mediated F-actin accumulation at the immunological synapse. May play a role in early contractile events in phagocytosis in macrophages. This Pongo abelii (Sumatran orangutan) protein is CDC42 small effector protein 2 (CDC42SE2).